The following is a 368-amino-acid chain: 4-hydroxy-3-methylbut-2-en-1-yl diphosphate synthase (flavodoxin) (368 aa).

The [4Fe-4S] cluster site is built by Cys-271, Cys-274, Cys-306, and Glu-313.

This sequence belongs to the IspG family. [4Fe-4S] cluster serves as cofactor.

The enzyme catalyses (2E)-4-hydroxy-3-methylbut-2-enyl diphosphate + oxidized [flavodoxin] + H2O + 2 H(+) = 2-C-methyl-D-erythritol 2,4-cyclic diphosphate + reduced [flavodoxin]. Its pathway is isoprenoid biosynthesis; isopentenyl diphosphate biosynthesis via DXP pathway; isopentenyl diphosphate from 1-deoxy-D-xylulose 5-phosphate: step 5/6. Its function is as follows. Converts 2C-methyl-D-erythritol 2,4-cyclodiphosphate (ME-2,4cPP) into 1-hydroxy-2-methyl-2-(E)-butenyl 4-diphosphate. This is 4-hydroxy-3-methylbut-2-en-1-yl diphosphate synthase (flavodoxin) from Mannheimia succiniciproducens (strain KCTC 0769BP / MBEL55E).